The primary structure comprises 632 residues: Fem-3 mRNA-binding factor 2 (632 aa).

Residues 1–11 (MDQSKMRRTNQ) are compositionally biased toward basic residues. Residues 1 to 37 (MDQSKMRRTNQFRKTSQKPPSTGIDSYPTPAQSPMAQ) form a disordered region. The segment covering 12 to 35 (FRKTSQKPPSTGIDSYPTPAQSPM) has biased composition (polar residues). The PUM-HD domain occupies 162-566 (TRSNNVLPTW…KMIETLANLR (405 aa)). Pumilio repeat units follow at residues 187 to 225 (EVLDSGDLMKFAVDKTGCQFLEKAVKGSLTSYQKFQLFE), 226 to 264 (QVIGRKDDFLKLSTNIFGNYLVQSVIGISLATNDDGYTK), 271 to 307 (NFISSQMTDMCLDKFACRVIQSSLQNMDLSLACKLVQ), 308 to 332 (ALPRDARLIAICVDQNANHVIQKVV), 345 to 384 (DFVATPEHLRQICSDKYGCRVVQTIIEKLTADSMNVDLTS), 400 to 436 (SVTNRCQELATNEYANYIIQHIVSNDDLAVYRECIIE), 438 to 473 (CLMRNLLSLSQEKFASHVVEKAFLHAPLELLAEMMD), and 484 to 521 (DTGKDALDIMMFHQFGNYVVQCMLTICCDAVSGRRQTK). A disordered region spans residues 609–632 (MLEPRSNKSSVSVKFSSSGSHGDD). Residues 615 to 632 (NKSSVSVKFSSSGSHGDD) show a composition bias toward low complexity.

In terms of assembly, interacts (via C-terminus) with gld-3 isoform A in an RNA-independent manner. Interacts with dlc-1, and is required for the localization of fbf-2 to P granules. Interacts (via RNA-binding domain) with lst-1, probably displaces bound auto-inhibitory C-terminal tail and alters its RNA-binding affinity. As to expression, expressed specifically in the germline (at protein level).

It localises to the cytoplasm. The protein resides in the cytoplasmic granule. Functionally, RNA-binding protein that binds to the consensus sequence 5'-UGUGCCAUA-3' in mRNA 3'-UTRs. Involved in the control of stem cells and sex determination in the C.elegans hermaphrodite germline. May also play a role in the hermaphrodite germline proliferation and oogenesis. By binding to the 3'-UTR, represses phosphatase lip-1 expression in the distal part of the germline mitotic zone. Binds specifically to the regulatory region of fem-3 3'-UTR and mediates the sperm/oocyte switch. Negatively regulates gld-3 expression possibly by directly binding to two sites within the gld-3 isoform b 3'-UTR. Suppresses germline tumor formation by preventing the dedifferentiation of secondary spermatocytes. C-terminal disordered region probably auto-inhibits RNA binding; auto-inhibition may be reversed by interaction with lst-1. The chain is Fem-3 mRNA-binding factor 2 from Caenorhabditis elegans.